A 170-amino-acid polypeptide reads, in one-letter code: RxLR effector protein CRE16 (170 aa).

Positions methionine 1 to alanine 23 are cleaved as a signal peptide. The short motif at arginine 47–arginine 68 is the RxLR-dEER element.

The protein belongs to the RxLR effector family.

It localises to the secreted. The protein localises to the host cytoplasm. The protein resides in the host nucleus. Effector that is involved in host plant infection. Contributes to virulence during the early infection stage, by inhibiting plant defense responses induced by both PAMP-triggered immunity (PTI) and effector-triggered immunity (ETI). The polypeptide is RxLR effector protein CRE16 (Phytophthora infestans (strain T30-4) (Potato late blight agent)).